Consider the following 116-residue polypeptide: Aspartate 1-decarboxylase (116 aa).

Ser-25 (schiff-base intermediate with substrate; via pyruvic acid) is an active-site residue. Pyruvic acid (Ser) is present on Ser-25. Thr-57 is a substrate binding site. The active-site Proton donor is Tyr-58. 73–75 (GAA) is a binding site for substrate.

This sequence belongs to the PanD family. Heterooctamer of four alpha and four beta subunits. The cofactor is pyruvate. In terms of processing, is synthesized initially as an inactive proenzyme, which is activated by self-cleavage at a specific serine bond to produce a beta-subunit with a hydroxyl group at its C-terminus and an alpha-subunit with a pyruvoyl group at its N-terminus.

The protein localises to the cytoplasm. It catalyses the reaction L-aspartate + H(+) = beta-alanine + CO2. It functions in the pathway cofactor biosynthesis; (R)-pantothenate biosynthesis; beta-alanine from L-aspartate: step 1/1. In terms of biological role, catalyzes the pyruvoyl-dependent decarboxylation of aspartate to produce beta-alanine. This chain is Aspartate 1-decarboxylase, found in Fervidobacterium nodosum (strain ATCC 35602 / DSM 5306 / Rt17-B1).